The chain runs to 496 residues: Probable G-protein coupled receptor Mth-like 5 (496 aa).

Residues 1–219 (MLVKTLGAHF…SNFLLRKILN (219 aa)) lie on the Extracellular side of the membrane. Residue Asn-82 is glycosylated (N-linked (GlcNAc...) asparagine). The helical transmembrane segment at 220–240 (PIFHGISLVILLVIAIIYFIL) threads the bilayer. The Cytoplasmic portion of the chain corresponds to 241-246 (PTLRDL). A helical transmembrane segment spans residues 247-267 (VGNIVTTIAMCLMVSQAADLV). The Extracellular segment spans residues 268–276 (RIFTELTSH). Residues 277-297 (VSFIVADIILCFSLLAAFFWL) form a helical membrane-spanning segment. The Cytoplasmic portion of the chain corresponds to 298-327 (NSFGFYIWKTFRSRNVFLRVTDGRKYCYYS). The helical transmembrane segment at 328–348 (AYAWGCTATMAALAVFAHFFL) threads the bilayer. Residues 349-366 (DAESYKQEHMVGEQETIG) lie on the Extracellular side of the membrane. The chain crosses the membrane as a helical span at residues 367–387 (WLGICIFFAPIACTILVNIFF). Residues 388-411 (YVTTRKLINRRTVYGRIAHKLKAN) are Cytoplasmic-facing. A helical transmembrane segment spans residues 412–432 (FIMFSLMLLVMSIAWLFLIMS). The Extracellular segment spans residues 433–438 (WLQMEG). Residues 439-459 (LLYAHIVVNALQTPLLLYICV) traverse the membrane as a helical segment. Residues 460–496 (LRQRHVTFLLKKTCCYNEPPSANDWGDELHYMNGNDY) lie on the Cytoplasmic side of the membrane.

The protein belongs to the G-protein coupled receptor 2 family. Mth subfamily.

The protein localises to the cell membrane. This chain is Probable G-protein coupled receptor Mth-like 5 (mthl5), found in Drosophila melanogaster (Fruit fly).